The sequence spans 56 residues: uncharacterized protein (56 aa).

A helical membrane pass occupies residues 12–32; it reads GITLFPYFAILILILAILVVG. Residues 19–31 are hydrophobic; that stretch reads FAILILILAILVV.

The protein localises to the membrane. This is an uncharacterized protein from Chenopodium amaranticolor (Quinoa).